The sequence spans 152 residues: Proteolipid protein 2 (152 aa).

N18 carries an N-linked (GlcNAc...) asparagine glycan. The MARVEL domain maps to 19–137; sequence FSRTRKGILL…DAYVTFPVRQ (119 aa). The next 3 membrane-spanning stretches (helical) occupy residues 25-45, 48-68, and 85-105; these read GILLFAEIILCLVILICFSAS, GYSSLSVIEMILAAIFFVVYM, and FFRTLIAAILYLITSIVVLVE. N108 carries an N-linked (GlcNAc...) asparagine glycan. Residues 112–132 traverse the membrane as a helical segment; the sequence is IVAGVLGLIATCLFGYDAYVT.

Enriched in colonic mucosa. The expression of A4 follows a gradient along the crypto-villus axis with the most abundant message occurring in the lower half of the crypt.

It is found in the membrane. Functionally, may play a role in cell differentiation in the intestinal epithelium. This is Proteolipid protein 2 (PLP2) from Homo sapiens (Human).